A 700-amino-acid polypeptide reads, in one-letter code: Polyribonucleotide nucleotidyltransferase (700 aa).

Mg(2+)-binding residues include Asp486 and Asp492. The KH domain occupies 554–613; the sequence is PKIISTTINPDKIREVIGPGGKMINKIIDETGVKIDINDDGRVYIFSSDIQAGKRARSMI. In terms of domain architecture, S1 motif spans 623–691; that stretch reads GQVFLGRVIR…KQGRVNLSRK (69 aa).

Belongs to the polyribonucleotide nucleotidyltransferase family. Mg(2+) is required as a cofactor.

It is found in the cytoplasm. It catalyses the reaction RNA(n+1) + phosphate = RNA(n) + a ribonucleoside 5'-diphosphate. Its function is as follows. Involved in mRNA degradation. Catalyzes the phosphorolysis of single-stranded polyribonucleotides processively in the 3'- to 5'-direction. In Acetivibrio thermocellus (strain ATCC 27405 / DSM 1237 / JCM 9322 / NBRC 103400 / NCIMB 10682 / NRRL B-4536 / VPI 7372) (Clostridium thermocellum), this protein is Polyribonucleotide nucleotidyltransferase.